The following is a 170-amino-acid chain: NADH-quinone oxidoreductase subunit B (170 aa).

Residues Cys-37, Cys-38, Cys-102, and Cys-131 each coordinate [4Fe-4S] cluster.

Belongs to the complex I 20 kDa subunit family. NDH-1 is composed of 14 different subunits. Subunits NuoB, C, D, E, F, and G constitute the peripheral sector of the complex. It depends on [4Fe-4S] cluster as a cofactor.

The protein localises to the cell inner membrane. It carries out the reaction a quinone + NADH + 5 H(+)(in) = a quinol + NAD(+) + 4 H(+)(out). Functionally, NDH-1 shuttles electrons from NADH, via FMN and iron-sulfur (Fe-S) centers, to quinones in the respiratory chain. The immediate electron acceptor for the enzyme in this species is believed to be ubiquinone. Couples the redox reaction to proton translocation (for every two electrons transferred, four hydrogen ions are translocated across the cytoplasmic membrane), and thus conserves the redox energy in a proton gradient. The chain is NADH-quinone oxidoreductase subunit B from Geobacter metallireducens (strain ATCC 53774 / DSM 7210 / GS-15).